A 579-amino-acid polypeptide reads, in one-letter code: Glucans biosynthesis protein G (579 aa).

The signal sequence occupies residues 1 to 37 (MIVSPHKASRIPGNRLRKALMASAALVGLMSAGQLWA). The segment at 516 to 579 (AKPAEEAKHD…TWSYQLPADE (64 aa)) is disordered. Over residues 517-539 (KPAEEAKHDKTAAKHGKAEKAAK) the composition is skewed to basic and acidic residues.

This sequence belongs to the OpgD/OpgG family.

Its subcellular location is the periplasm. It participates in glycan metabolism; osmoregulated periplasmic glucan (OPG) biosynthesis. Its function is as follows. Involved in the biosynthesis of osmoregulated periplasmic glucans (OPGs). The sequence is that of Glucans biosynthesis protein G from Pseudomonas putida (strain W619).